We begin with the raw amino-acid sequence, 500 residues long: Probable cytosol aminopeptidase (500 aa).

Residues K265 and D270 each coordinate Mn(2+). The active site involves K277. Residues D288, D347, and E349 each coordinate Mn(2+). R351 is an active-site residue.

The protein belongs to the peptidase M17 family. It depends on Mn(2+) as a cofactor.

The protein resides in the cytoplasm. It catalyses the reaction Release of an N-terminal amino acid, Xaa-|-Yaa-, in which Xaa is preferably Leu, but may be other amino acids including Pro although not Arg or Lys, and Yaa may be Pro. Amino acid amides and methyl esters are also readily hydrolyzed, but rates on arylamides are exceedingly low.. The catalysed reaction is Release of an N-terminal amino acid, preferentially leucine, but not glutamic or aspartic acids.. Presumably involved in the processing and regular turnover of intracellular proteins. Catalyzes the removal of unsubstituted N-terminal amino acids from various peptides. The protein is Probable cytosol aminopeptidase of Corynebacterium glutamicum (strain ATCC 13032 / DSM 20300 / JCM 1318 / BCRC 11384 / CCUG 27702 / LMG 3730 / NBRC 12168 / NCIMB 10025 / NRRL B-2784 / 534).